Consider the following 395-residue polypeptide: Na(+)/H(+) antiporter NhaA (395 aa).

A run of 11 helical transmembrane segments spans residues 11–31, 61–81, 96–116, 127–147, 156–176, 179–199, 215–237, 262–282, 295–315, 334–354, and 366–386; these read FQLE…ALII, LLLW…GLEV, IVLP…IYWF, GWAI…ALLG, LFLM…IAIF, GELS…LVAM, LILW…TLAF, VAYG…LSGV, IAVG…WLAV, VAIL…LAFV, and MGIL…TAAA.

This sequence belongs to the NhaA Na(+)/H(+) (TC 2.A.33) antiporter family.

It localises to the cell inner membrane. It carries out the reaction Na(+)(in) + 2 H(+)(out) = Na(+)(out) + 2 H(+)(in). In terms of biological role, na(+)/H(+) antiporter that extrudes sodium in exchange for external protons. The sequence is that of Na(+)/H(+) antiporter NhaA from Pseudomonas fluorescens (strain Pf0-1).